The sequence spans 918 residues: GPI ethanolamine phosphate transferase 3 (918 aa).

The helical transmembrane segment at 16–36 (IGTWKYIQACIFFAIILISNF) threads the bilayer. Residues Asn54, Asn71, Asn101, Asn197, and Asn399 are each glycosylated (N-linked (GlcNAc...) asparagine). Transmembrane regions (helical) follow at residues 429–449 (LFPM…LALL), 459–479 (MSAN…ILIL), 486–506 (SPFP…LNSF), 523–543 (FSIF…FTVW), 547–563 (LCHF…FCKC), 567–587 (MSPL…LQVI), 616–636 (TLIV…ILQL), 651–671 (LSIL…HHVF), 687–707 (SLAN…FFLL), 715–735 (INVI…LSFL), 738–758 (PLGH…IQLK), 762–782 (PSVG…SHFF), 813–833 (IFMF…IPLF), 853–873 (FSFI…AGFF), and 887–907 (FMLS…QCFG).

Belongs to the PIGG/PIGN/PIGO family. PIGO subfamily. In terms of processing, glycosylated.

The protein resides in the endoplasmic reticulum membrane. The protein operates within glycolipid biosynthesis; glycosylphosphatidylinositol-anchor biosynthesis. Involved in glycosylphosphatidylinositol-anchor biosynthesis. Transfers ethanolamine phosphate to the GPI third mannose which links the GPI-anchor to the C-terminus of the proteins by an amide bond. Involved in cell wall biosynthesis. The polypeptide is GPI ethanolamine phosphate transferase 3 (gpi13) (Schizosaccharomyces pombe (strain 972 / ATCC 24843) (Fission yeast)).